We begin with the raw amino-acid sequence, 181 residues long: NADH-quinone oxidoreductase subunit B (181 aa).

Residues Cys-60, Cys-61, Cys-125, and Cys-155 each contribute to the [4Fe-4S] cluster site.

This sequence belongs to the complex I 20 kDa subunit family. As to quaternary structure, NDH-1 is composed of 14 different subunits. Subunits NuoB, C, D, E, F, and G constitute the peripheral sector of the complex. The cofactor is [4Fe-4S] cluster.

The protein resides in the cell inner membrane. The catalysed reaction is a quinone + NADH + 5 H(+)(in) = a quinol + NAD(+) + 4 H(+)(out). Functionally, NDH-1 shuttles electrons from NADH, via FMN and iron-sulfur (Fe-S) centers, to quinones in the respiratory chain. Couples the redox reaction to proton translocation (for every two electrons transferred, four hydrogen ions are translocated across the cytoplasmic membrane), and thus conserves the redox energy in a proton gradient. The sequence is that of NADH-quinone oxidoreductase subunit B from Novosphingobium aromaticivorans (strain ATCC 700278 / DSM 12444 / CCUG 56034 / CIP 105152 / NBRC 16084 / F199).